Here is a 139-residue protein sequence, read N- to C-terminus: Basic phospholipase A2 beta-bungarotoxin A2 chain (139 aa).

The signal sequence occupies residues 1-9 (AVCVSLLGA). Positions 10–17 (ANIPPHPF) are excised as a propeptide. The Ca(2+) site is built by Y45, G47, and G49. C46 and C62 are oxidised to a cystine. H65 is a catalytic residue. D66 provides a ligand contact to Ca(2+).

This sequence belongs to the phospholipase A2 family. Group I subfamily. D49 sub-subfamily. Heterodimer; disulfide-linked. The A chains have phospholipase A2 activity and the B chains show homology with the basic protease inhibitors. It depends on Ca(2+) as a cofactor. In terms of tissue distribution, expressed by the venom gland.

Its subcellular location is the secreted. It catalyses the reaction a 1,2-diacyl-sn-glycero-3-phosphocholine + H2O = a 1-acyl-sn-glycero-3-phosphocholine + a fatty acid + H(+). Its function is as follows. Snake venom phospholipase A2 (PLA2) that shows presynaptic neurotoxicity. PLA2 catalyzes the calcium-dependent hydrolysis of the 2-acyl groups in 3-sn-phosphoglycerides. This chain is Basic phospholipase A2 beta-bungarotoxin A2 chain, found in Bungarus candidus (Malayan krait).